We begin with the raw amino-acid sequence, 737 residues long: MRKPRVTAATSGPDGLAPASDVAAIVAGTHGDPFAVLGVHEVGKGLFARCFVPHAETVTAYTLTGIEAGALSRRDDAGFFEGKLSIKKRQPLRYHAHNAGGDWWLTDPYSFGPVLGPMDDYYIAEGSHLRLFDKLGAHVIEHEGATGVHFAVWAPNAKRVSVVGDFNDWDGRRHTMRDRRDTGIWEVFIPDIGAGRPYKYEIIGPDGVRLPLKADPFAFKSELRPATASVVAVPPAHDWGDEAHRNYWRNADPRREAVSIYEVHAGSWQLHDDGTFLSWDELADRLIPYVVETGFTHIEFMPISEHPYDPSWGYQTTGLYAPSARFGDPDGFARFVDGAHRAGVGVILDWVPAHFPVDAHGLAHFDGTALYEHADPRKGFHPDWNTAIYNFGRREVVSFLVNNALFWAEKYHVDGLRVDAVASMLYLDYSRKAGEWIPNEKGGRENLEAVSFLQKMNKEVYGHHPGVMTIAEESTSWPKVSAPVHEGGLGFGFKWNMGFMHDTLEYFSKEPIFRKHHHNDLTFGLTYAFSENFVLPLSHDEVVHGKGTLLSKMAGDDWQKFATLRAYYGFMWGYPGKKLLFMGQEFAQRREWSEARALDWNLLDFRPHRGVWQTVRDLNYLYRSRPALHGRDCEPEGFSWLIVDDSQNSVFAWVRNAPGGSPVAVISNFTPVPRDNYRVPLPKAGKWREIINTDASEYGGSGMGNGGMVEARAEGKNISATMLLPPLSTIMLELVAD.

D419 (nucleophile) is an active-site residue. Residue E472 is the Proton donor of the active site.

This sequence belongs to the glycosyl hydrolase 13 family. GlgB subfamily. In terms of assembly, monomer.

It catalyses the reaction Transfers a segment of a (1-&gt;4)-alpha-D-glucan chain to a primary hydroxy group in a similar glucan chain.. It functions in the pathway glycan biosynthesis; glycogen biosynthesis. In terms of biological role, catalyzes the formation of the alpha-1,6-glucosidic linkages in glycogen by scission of a 1,4-alpha-linked oligosaccharide from growing alpha-1,4-glucan chains and the subsequent attachment of the oligosaccharide to the alpha-1,6 position. The chain is 1,4-alpha-glucan branching enzyme GlgB from Mesorhizobium japonicum (strain LMG 29417 / CECT 9101 / MAFF 303099) (Mesorhizobium loti (strain MAFF 303099)).